The chain runs to 242 residues: Segregation and condensation protein A (242 aa).

It belongs to the ScpA family. In terms of assembly, component of a cohesin-like complex composed of ScpA, ScpB and the Smc homodimer, in which ScpA and ScpB bind to the head domain of Smc. The presence of the three proteins is required for the association of the complex with DNA.

It localises to the cytoplasm. In terms of biological role, participates in chromosomal partition during cell division. May act via the formation of a condensin-like complex containing Smc and ScpB that pull DNA away from mid-cell into both cell halves. This chain is Segregation and condensation protein A, found in Streptococcus pneumoniae serotype 2 (strain D39 / NCTC 7466).